A 251-amino-acid chain; its full sequence is DNA repair protein RecO (251 aa).

The protein belongs to the RecO family.

Involved in DNA repair and RecF pathway recombination. The sequence is that of DNA repair protein RecO from Macrococcus caseolyticus (strain JCSC5402) (Macrococcoides caseolyticum).